A 658-amino-acid chain; its full sequence is Transcription factor E2-alpha (658 aa).

Disordered regions lie at residues 42–82 (STQF…GTHY), 140–191 (SALS…YPAN), 276–313 (NPSVTSSFSSTPAQYGVSSHTPPISTGDTIIGNRGTAT), 331–372 (DHSS…SYDG), 460–558 (VPAQ…ERRV), and 628–658 (EEEKVSGVDPQMGLSGGHPGVGDSHNPVGHM). Positions 173 to 179 (PKKVRKV) match the Nuclear localization signal motif. Residues 276-303 (NPSVTSSFSSTPAQYGVSSHTPPISTGD) show a composition bias toward polar residues. A compositionally biased stretch (low complexity) spans 333-344 (SSTNFSSTPSTP). Residues 345 to 355 (VGSPQGITGSG) are compositionally biased toward polar residues. The span at 493–507 (PDIKRESKEDEENRS) shows a compositional bias: basic and acidic residues. Acidic residues predominate over residues 533–544 (QDEDEDEDDDNL). Basic and acidic residues predominate over residues 548 to 558 (QKAEREKERRV). In terms of domain architecture, bHLH spans 555–608 (ERRVANNARERLRVKDINEAFKELGRMCQLHLNSEKPQTKLLILHQAVSVILSL).

Homodimer. Heterodimer; efficient DNA binding requires dimerization with another bHLH protein. Interacts with tgfb1i1.

The protein localises to the nucleus. Its function is as follows. Transcriptional regulator involved in the initiation of neuronal differentiation and mesenchymal to epithelial transition. Heterodimers between tcf3 and tissue-specific basic helix-loop-helix (bHLH) proteins play major roles in determining tissue-specific cell fate during embryogenesis, like muscle or early B-cell differentiation. Together with tcf15, required for the mesenchymal to epithelial transition. Dimers bind DNA on E-box motifs: 5'-CANNTG-3'. The sequence is that of Transcription factor E2-alpha (tcf3) from Xenopus laevis (African clawed frog).